The following is a 209-amino-acid chain: Guanylate kinase (209 aa).

Positions 5–184 (GLLIVFSGPS…AAERVKRVIE (180 aa)) constitute a Guanylate kinase-like domain. 12 to 19 (GPSGVGKG) is an ATP binding site.

This sequence belongs to the guanylate kinase family.

It is found in the cytoplasm. It carries out the reaction GMP + ATP = GDP + ADP. Essential for recycling GMP and indirectly, cGMP. This chain is Guanylate kinase, found in Streptococcus agalactiae serotype Ia (strain ATCC 27591 / A909 / CDC SS700).